Reading from the N-terminus, the 212-residue chain is External core antigen (212 aa).

Residues 1-19 (MQLFHLCLIISCSCPTVQA) form the signal peptide. The tract at residues 25–27 (GWL) is HBEAG. The disordered stretch occupies residues 165 to 212 (NAPILSTLPETTVVRRRGRSPRRRTPSPRRRRSQSPRRRRSQSRESQC). Basic residues predominate over residues 178 to 205 (VRRRGRSPRRRTPSPRRRRSQSPRRRRS). Residues 184–190 (SPRRRTP) form a 1; half-length repeat. The interval 184–206 (SPRRRTPSPRRRRSQSPRRRRSQ) is 3 X 8 AA repeats of S-P-R-R-R-R-S-Q. A propeptide spanning residues 184-212 (SPRRRTPSPRRRRSQSPRRRRSQSRESQC) is cleaved from the precursor. 2 consecutive repeat copies span residues 191-198 (SPRRRRSQ) and 199-206 (SPRRRRSQ).

The protein belongs to the orthohepadnavirus precore antigen family. In terms of assembly, homodimerizes. Post-translationally, phosphorylated. Cleaved by host furin.

It localises to the secreted. The protein localises to the host nucleus. In terms of biological role, may regulate immune response to the intracellular capsid in acting as a T-cell tolerogen, by having an immunoregulatory effect which prevents destruction of infected cells by cytotoxic T-cells. This immune regulation may predispose to chronicity during perinatal infections and prevent severe liver injury during adult infections. The protein is External core antigen of Hepatitis B virus genotype C subtype ayw (isolate China/Tibet127/2002) (HBV-C).